Here is a 261-residue protein sequence, read N- to C-terminus: Zinc import ATP-binding protein ZnuC (261 aa).

Positions 6 to 221 (IRLEQVGVTF…PAFVELFGKN (216 aa)) constitute an ABC transporter domain. ATP is bound at residue 38-45 (GPNGAGKT).

This sequence belongs to the ABC transporter superfamily. Zinc importer (TC 3.A.1.15.5) family. In terms of assembly, the complex is composed of two ATP-binding proteins (ZnuC), two transmembrane proteins (ZnuB) and a solute-binding protein (ZnuA).

It is found in the cell inner membrane. The catalysed reaction is Zn(2+)(out) + ATP(in) + H2O(in) = Zn(2+)(in) + ADP(in) + phosphate(in) + H(+)(in). Its function is as follows. Part of the ABC transporter complex ZnuABC involved in zinc import. Responsible for energy coupling to the transport system. This chain is Zinc import ATP-binding protein ZnuC, found in Pseudomonas fluorescens (strain ATCC BAA-477 / NRRL B-23932 / Pf-5).